Reading from the N-terminus, the 113-residue chain is U11-theraphotoxin-Hhn1l (113 aa).

Residues Met-1–Ala-21 form the signal peptide. Residues Asp-22–Arg-74 constitute a propeptide that is removed on maturation. Disulfide bonds link Cys-82-Cys-95 and Cys-89-Cys-110.

It belongs to the neurotoxin 14 (magi-1) family. 01 (HNTX-16) subfamily. As to expression, expressed by the venom gland.

It is found in the secreted. In terms of biological role, probable ion channel inhibitor. This is U11-theraphotoxin-Hhn1l from Cyriopagopus hainanus (Chinese bird spider).